A 468-amino-acid polypeptide reads, in one-letter code: ERO1-like protein alpha (468 aa).

Positions 1-23 (MGRGWGFLFGLLGAVWLLSSGHG) are cleaved as a signal peptide. 8 cysteine pairs are disulfide-bonded: cysteine 35-cysteine 48, cysteine 37-cysteine 46, cysteine 85-cysteine 391, cysteine 94-cysteine 99, cysteine 94-cysteine 131, cysteine 99-cysteine 104, cysteine 208-cysteine 241, and cysteine 394-cysteine 397. 2 positions are modified to phosphoserine: serine 106 and serine 143. Serine 145 is modified (phosphoserine; by FAM20C). 3 residues coordinate FAD: arginine 187, threonine 189, and tryptophan 200. Residues serine 252 and histidine 255 each coordinate FAD. Asparagine 280 carries N-linked (GlcNAc...) asparagine glycosylation. Arginine 287 and arginine 300 together coordinate FAD. An N-linked (GlcNAc...) asparagine glycan is attached at asparagine 384.

The protein belongs to the EROs family. Predominantly monomer. May function both as a monomer and a homodimer. Interacts with PDILT. Interacts with ERP44; the interaction results in retention of ERO1A in the endoplasmic reticulum. Requires FAD as cofactor. In terms of processing, N-glycosylated. Post-translationally, the Cys-94/Cys-99 and Cys-394/Cys-397 disulfide bonds constitute the redox-active center. The Cys-94/Cys-99 disulfide bond may accept electron from P4HB and funnel them to the active site disulfide Cys-394/Cys-397. The regulatory Cys-99/Cys-104 disulfide bond stabilizes the other regulatory bond Cys-94/Cys-131. Phosphorylated on Ser-145 by FAM20C in the Golgi which increases its enzymatic activity. Phosphorylation is induced by lactation. It is also induced by hypoxia and reductive stress. Widely expressed at low level. Expressed at high level in upper digestive tract. Highly expressed in esophagus. Weakly expressed in stomach and duodenum.

Its subcellular location is the endoplasmic reticulum membrane. The protein resides in the golgi apparatus lumen. It localises to the secreted. The protein localises to the cell projection. It is found in the dendrite. Its activity is regulated as follows. Enzyme activity is tightly regulated to prevent the accumulation of reactive oxygen species in the endoplasmic reticulum. Reversibly down-regulated by the formation of disulfide bonds between the active site Cys-94 and Cys-131, and between Cys-99 and Cys-104. Glutathione may be required to regulate its activity in the endoplasmic reticulum. In terms of biological role, oxidoreductase involved in disulfide bond formation in the endoplasmic reticulum. Efficiently reoxidizes P4HB/PDI, the enzyme catalyzing protein disulfide formation, in order to allow P4HB to sustain additional rounds of disulfide formation. Following P4HB reoxidation, passes its electrons to molecular oxygen via FAD, leading to the production of reactive oxygen species (ROS) in the cell. Required for the proper folding of immunoglobulins. Plays an important role in ER stress-induced, CHOP-dependent apoptosis by activating the inositol 1,4,5-trisphosphate receptor IP3R1. Involved in the release of the unfolded cholera toxin from reduced P4HB/PDI in case of infection by V.cholerae, thereby playing a role in retrotranslocation of the toxin. This chain is ERO1-like protein alpha, found in Homo sapiens (Human).